Consider the following 501-residue polypeptide: Geissoschizine oxidase (501 aa).

Residues 1–21 (MEFSFSSPALYIVYFLLFFVV) traverse the membrane as a helical segment. The N-linked (GlcNAc...) asparagine glycan is linked to asparagine 60. Cysteine 442 contacts heme.

This sequence belongs to the cytochrome P450 family. The cofactor is heme. Expressed in leaf epidermis. Also present in the leaf internal phloem-associated parenchyma (IPAP) inside the mesophyll.

Its subcellular location is the membrane. The enzyme catalyses (19E)-geissoschizine + reduced [NADPH--hemoprotein reductase] + O2 = akuammicine + formate + oxidized [NADPH--hemoprotein reductase] + H2O + H(+). It catalyses the reaction (19E)-geissoschizine + reduced [NADPH--hemoprotein reductase] + O2 = 3,17-didehydrostemmadenine + oxidized [NADPH--hemoprotein reductase] + 2 H2O. Its pathway is alkaloid biosynthesis. Its function is as follows. Component of the seco-iridoid and derivatives monoterpenoid indole alkaloids (MIAs, e.g. vincristine, quinine, and strychnine) biosynthesis pathway. Catalyzes the oxidation of 19E-geissoschizine to produce a short-lived MIA unstable intermediate which can be spontaneously converted into akuammicine or oxidized by Redox1 and Redox2 to produce stemmadenine and 16S/R-deshydroxymethylstemmadenine (16S/R-DHS). The chain is Geissoschizine oxidase from Catharanthus roseus (Madagascar periwinkle).